The primary structure comprises 193 residues: Ion-translocating oxidoreductase complex subunit A (193 aa).

Helical transmembrane passes span 5-25 (LLLL…FLGL), 39-59 (IGMG…AYLV), 67-87 (LGIE…VVQF), 102-122 (LLGI…VALL), 134-154 (IIYG…FASM), and 171-191 (SIAM…TGLV).

It belongs to the NqrDE/RnfAE family. In terms of assembly, the complex is composed of six subunits: RnfA, RnfB, RnfC, RnfD, RnfE and RnfG.

Its subcellular location is the cell inner membrane. Functionally, part of a membrane-bound complex that couples electron transfer with translocation of ions across the membrane. The sequence is that of Ion-translocating oxidoreductase complex subunit A from Vibrio cholerae serotype O1 (strain ATCC 39315 / El Tor Inaba N16961).